A 2896-amino-acid chain; its full sequence is Hemocyanin G-type, units Oda to Odg (2896 aa).

The segment at 1 to 419 (NLIRKDVDAL…ADMVVVDKTG (419 aa)) is functional unit Oda. His-41 is a binding site for Cu cation. The cysteines at positions 47 and 57 are disulfide-linked. Residues 58–60 (CLH) constitute a cross-link (2'-(S-cysteinyl)-histidine (Cys-His)). Cu cation-binding residues include His-60, His-69, His-178, His-182, and His-209. 2 cysteine pairs are disulfide-bonded: Cys-168-Cys-234 and Cys-321-Cys-333. Residue Asn-386 is glycosylated (N-linked (GlcNAc...) asparagine). The segment at 420 to 834 (LNVRKDLQSL…KESGVVFDEL (415 aa)) is functional unit Odb. His-460 contributes to the Cu cation binding site. Residues Cys-466 and Cys-477 are joined by a disulfide bond. A cross-link (2'-(S-cysteinyl)-histidine (Cys-His)) is located at residues 478–480 (CVH). Cu cation-binding residues include His-480, His-489, His-601, His-605, and His-632. Cysteines 591 and 657 form a disulfide. Residue Asn-804 is glycosylated (N-linked (GlcNAc...) asparagine). The segment at 835-1254 (YRSRRDVSSL…GIWVEPVTSA (420 aa)) is functional unit Odc. His-875 is a binding site for Cu cation. Residues Cys-881 and Cys-892 are joined by a disulfide bond. A cross-link (2'-(S-cysteinyl)-histidine (Cys-His)) is located at residues 893 to 895 (CHH). Cu cation contacts are provided by His-895, His-904, His-1013, His-1017, His-1044, and His-1292. Cysteines 1003 and 1070 form a disulfide. Residues 1255–1667 (NRIRKNLNAL…ADIKSEEGNE (413 aa)) form a functional unit Odd region. A disulfide bridge connects residues Cys-1298 and Cys-1309. A cross-link (2'-(S-cysteinyl)-histidine (Cys-His)) is located at residues 1310–1312 (CIH). The Cu cation site is built by His-1312, His-1321, His-1425, His-1429, and His-1456. A disulfide bridge connects residues Cys-1415 and Cys-1482. N-linked (GlcNAc...) asparagine glycosylation occurs at Asn-1496. The cysteines at positions 1571 and 1581 are disulfide-linked. N-linked (GlcNAc...) asparagine glycosylation is present at Asn-1634. The functional unit Ode stretch occupies residues 1668-2085 (YLVRKNVERL…NEDADIDTPL (418 aa)). Residue His-1708 coordinates Cu cation. Residues Cys-1714 and Cys-1725 are joined by a disulfide bond. Positions 1726–1728 (CLH) form a cross-link, 2'-(S-cysteinyl)-histidine (Cys-His). Cu cation contacts are provided by His-1728, His-1737, His-1849, His-1853, and His-1880. 2 cysteine pairs are disulfide-bonded: Cys-1839–Cys-1906 and Cys-1997–Cys-2003. N-linked (GlcNAc...) asparagine glycosylation occurs at Asn-2055. The interval 2086–2502 (NHIRRNVESL…REVHKKTVGD (417 aa)) is functional unit Odf. His-2126 contributes to the Cu cation binding site. Cys-2131 and Cys-2141 are joined by a disulfide. The 2'-(S-cysteinyl)-histidine (Cys-His) cross-link spans 2142 to 2144 (CLH). The Cu cation site is built by His-2144 and His-2153. An N-linked (GlcNAc...) asparagine glycan is attached at Asn-2201. Intrachain disulfides connect Cys-2252–Cys-2319 and Cys-2406–Cys-2411. Residues His-2262, His-2266, and His-2293 each contribute to the Cu cation site. The segment at 2503 to 2896 (AIIRKNVNSL…VFLAPAKTTH (394 aa)) is functional unit Odg. Residue His-2543 coordinates Cu cation. Residues Cys-2549 and Cys-2559 are joined by a disulfide bond. Asn-2553 carries an N-linked (GlcNAc...) asparagine glycan. The segment at residues 2560-2562 (CQH) is a cross-link (2'-(S-cysteinyl)-histidine (Cys-His)). 5 residues coordinate Cu cation: His-2562, His-2571, His-2671, His-2675, and His-2702. 2 disulfide bridges follow: Cys-2661–Cys-2728 and Cys-2815–Cys-2821.

This sequence belongs to the tyrosinase family. Hemocyanin subfamily. Decamers of large identical subunits (350 kDa), each containing 7 globular oxygen-binding functional units: ODA, ODB, ODC, ODD, ODE, ODF, and ODG. Decamer formation requires the presence of magnesium ions. Cu(2+) is required as a cofactor.

In terms of biological role, hemocyanins are copper-containing oxygen carriers occurring freely dissolved in the hemolymph of many mollusks and arthropods. In Enteroctopus dofleini (North Pacific giant octopus), this protein is Hemocyanin G-type, units Oda to Odg (ODHCY).